Reading from the N-terminus, the 216-residue chain is Acyl-homoserine-lactone synthase (216 aa).

It belongs to the autoinducer synthase family.

It catalyses the reaction a fatty acyl-[ACP] + S-adenosyl-L-methionine = an N-acyl-L-homoserine lactone + S-methyl-5'-thioadenosine + holo-[ACP] + H(+). Required for the synthesis of OHHL (N-(3-oxohexanoyl)-L-homoserine lactone), an autoinducer molecule which binds to CarR and thus acts in the control of the biosynthesis of carbapenem antibiotics. The polypeptide is Acyl-homoserine-lactone synthase (carI) (Pectobacterium carotovorum subsp. carotovorum (Erwinia carotovora subsp. carotovora)).